The sequence spans 404 residues: S-adenosylmethionine synthase (404 aa).

His-18 is an ATP binding site. Position 20 (Asp-20) interacts with Mg(2+). Glu-46 is a binding site for K(+). L-methionine contacts are provided by Glu-59 and Gln-102. Residues 102 to 112 (QSPDIAQGVDT) form a flexible loop region. Residues 177–179 (DGK), 249–250 (KF), Asp-258, 264–265 (RK), Ala-281, and Lys-285 each bind ATP. Residue Asp-258 participates in L-methionine binding. An L-methionine-binding site is contributed by Lys-289.

Belongs to the AdoMet synthase family. In terms of assembly, homotetramer; dimer of dimers. Mg(2+) is required as a cofactor. The cofactor is K(+).

The protein resides in the cytoplasm. The catalysed reaction is L-methionine + ATP + H2O = S-adenosyl-L-methionine + phosphate + diphosphate. It participates in amino-acid biosynthesis; S-adenosyl-L-methionine biosynthesis; S-adenosyl-L-methionine from L-methionine: step 1/1. Its function is as follows. Catalyzes the formation of S-adenosylmethionine (AdoMet) from methionine and ATP. The overall synthetic reaction is composed of two sequential steps, AdoMet formation and the subsequent tripolyphosphate hydrolysis which occurs prior to release of AdoMet from the enzyme. The sequence is that of S-adenosylmethionine synthase from Nocardia farcinica (strain IFM 10152).